The sequence spans 296 residues: UBX domain-containing protein 1-A (296 aa).

The region spanning 1 to 42 is the UBA domain; it reads MAECSTLESLIEMGFSSTRAEKALTATGNQGIEPAMDWLVEH. The segment at 43-216 is disordered; sequence EDDPDIDEPS…VQEPPTKKEY (174 aa). A compositionally biased stretch (low complexity) spans 61–75; sequence TDTADTTDTTDTTDT. Composition is skewed to basic and acidic residues over residues 86–100, 107–123, and 138–178; these read PLTEEEKEKQTKRMM, QNEREEREKKERIEQEK, and KMQE…DRAR. The stretch at 87–177 forms a coiled coil; sequence LTEEEKEKQT…KIARDKADRA (91 aa). Residues 191 to 206 are compositionally biased toward low complexity; that stretch reads PAETSIPATTPSPSSP. A UBX domain is found at 214–293; sequence KEYDQCRIQV…GLVPTAVLIV (80 aa).

Its subcellular location is the cytoplasm. Component of a complex required to couple deglycosylation and proteasome-mediated degradation of misfolded proteins in the endoplasmic reticulum that are retrotranslocated in the cytosol. Involved in ubiquitin-proteasome systems. The protein is UBX domain-containing protein 1-A (ubxn1-a) of Xenopus laevis (African clawed frog).